The sequence spans 439 residues: 23S rRNA (uracil(1939)-C(5))-methyltransferase RlmD (439 aa).

Residues 10-69 form the TRAM domain; the sequence is KTQLNTRHQAVQVERLDHHGAGIAYLKKKPLFIDGALPGEEVVTQLVEEKSKFARGKLIK. [4Fe-4S] cluster-binding residues include C82, C88, C91, and C169. Q272, F301, N306, E322, N349, and D370 together coordinate S-adenosyl-L-methionine. The active-site Nucleophile is C396.

Belongs to the class I-like SAM-binding methyltransferase superfamily. RNA M5U methyltransferase family. RlmD subfamily.

The catalysed reaction is uridine(1939) in 23S rRNA + S-adenosyl-L-methionine = 5-methyluridine(1939) in 23S rRNA + S-adenosyl-L-homocysteine + H(+). Catalyzes the formation of 5-methyl-uridine at position 1939 (m5U1939) in 23S rRNA. This chain is 23S rRNA (uracil(1939)-C(5))-methyltransferase RlmD, found in Vibrio parahaemolyticus serotype O3:K6 (strain RIMD 2210633).